The primary structure comprises 122 residues: Urocortin (122 aa).

An N-terminal signal peptide occupies residues 1 to 25; that stretch reads MIQRGRATLLVALLLLAQLRPESSQ. The propeptide occupies 26 to 80; the sequence is WSPAAAAATGVQDPNLRWSPGVRNQGGGVRALLLLLAERFPRRAGSEPAGERQRR. At V120 the chain carries Valine amide.

The protein belongs to the sauvagine/corticotropin-releasing factor/urotensin I family. In terms of assembly, interacts with CRHR1 and CRHR2 (via their N-terminal extracellular domain). In terms of tissue distribution, in the organ of Corti, detected in the inner hair cell region (at protein level). Expressed in skin (at protein level).

The protein localises to the secreted. Functionally, acts in vitro to stimulate the secretion of adrenocorticotropic hormone (ACTH). Binds with high affinity to CRF receptor types 1, 2-alpha, and 2-beta. Plays a role in the establishment of normal hearing thresholds. Reduces food intake and regulates ghrelin levels in gastric body and plasma. The polypeptide is Urocortin (Ucn) (Mus musculus (Mouse)).